We begin with the raw amino-acid sequence, 228 residues long: Tumor necrosis factor receptor superfamily member 18 (228 aa).

A signal peptide spans 1–19 (MGAWAMLYGVSMLCVLDLG). At 20-153 (QPSVVEEPGC…EPLPTEQYGH (134 aa)) the chain is on the extracellular side. TNFR-Cys repeat units lie at residues 28-61 (GCGP…ERCI), 62-101 (CVTP…FRCV), and 102-142 (ACAM…AVCI). 5 disulfides stabilise this stretch: Cys29-Cys44, Cys62-Cys74, Cys69-Cys82, Cys103-Cys122, and Cys116-Cys141. Asn36 and Asn40 each carry an N-linked (GlcNAc...) asparagine glycan. N-linked (GlcNAc...) asparagine glycosylation is found at Asn121 and Asn134. The helical transmembrane segment at 154 to 174 (LTVIFLVMAACIFFLTTVQLG) threads the bilayer. At 175-228 (LHIWQLRRQHMCPRETQPFAEVQLSAEDACSFQFPEEERGEQTEEKCHLGGRWP) the chain is on the cytoplasmic side.

Binds to TRAF1, TRAF2, and TRAF3, but not TRAF5 and TRAF6. Binds through its C-terminus to SIVA1/SIVA. In terms of tissue distribution, preferentially expressed in activated T lymphocytes.

It is found in the cell membrane. Its subcellular location is the secreted. Receptor for TNFSF18. Seems to be involved in interactions between activated T-lymphocytes and endothelial cells and in the regulation of T-cell receptor-mediated cell death. Mediated NF-kappa-B activation via the TRAF2/NIK pathway. This is Tumor necrosis factor receptor superfamily member 18 (Tnfrsf18) from Mus musculus (Mouse).